Reading from the N-terminus, the 334-residue chain is Hematopoietic SH2 domain-containing protein (334 aa).

The SH2 domain occupies 34 to 125; the sequence is WFHGTISREA…PFGELLTQAC (92 aa). Disordered stretches follow at residues 157–181 and 254–280; these read EVQR…KGEF and EDSC…ATFR. Positions 258–267 are enriched in polar residues; sequence AATTSLQNPA.

As to quaternary structure, interacts with FES and TNK2. In terms of processing, may be phosphorylated by FES and ACK1. In terms of tissue distribution, predominantly expressed in spleen and thymus. Appears not to be expressed in heart, brain, liver, kidney, embryo, lung and ovary.

The protein localises to the cytoplasm. It localises to the mitochondrion. Its function is as follows. Adapter protein involved in tyrosine kinase and CD28 signaling. May be a modulator of the apoptotic response through its ability to affect mitochondrial stability. This is Hematopoietic SH2 domain-containing protein (Hsh2d) from Mus musculus (Mouse).